Reading from the N-terminus, the 20-residue chain is Dahlein-5.1 (20 aa).

In terms of tissue distribution, expressed by the skin dorsal glands.

It localises to the secreted. Its function is as follows. Has no antimicrobial activity. Strongly inhibits the formation of NO by neuronal nitric oxide synthase at micromolar concentrations. Acts by a non-competitive mechanism, probably by binding to calcium/calmodulin and as a consequence blocking calmodulin attachment to nNOS. The protein is Dahlein-5.1 of Ranoidea dahlii (Dahl's aquatic frog).